Consider the following 340-residue polypeptide: Anthranilate phosphoribosyltransferase (340 aa).

5-phospho-alpha-D-ribose 1-diphosphate-binding positions include Gly78, 81–82 (GD), Thr86, 88–91 (NIST), 106–114 (KHGNRSVSS), and Ser118. Gly78 is an anthranilate binding site. Ser90 is a binding site for Mg(2+). Position 109 (Asn109) interacts with anthranilate. Anthranilate is bound at residue Arg164. 2 residues coordinate Mg(2+): Asp223 and Glu224.

It belongs to the anthranilate phosphoribosyltransferase family. In terms of assembly, homodimer. Mg(2+) is required as a cofactor.

It carries out the reaction N-(5-phospho-beta-D-ribosyl)anthranilate + diphosphate = 5-phospho-alpha-D-ribose 1-diphosphate + anthranilate. It functions in the pathway amino-acid biosynthesis; L-tryptophan biosynthesis; L-tryptophan from chorismate: step 2/5. Catalyzes the transfer of the phosphoribosyl group of 5-phosphorylribose-1-pyrophosphate (PRPP) to anthranilate to yield N-(5'-phosphoribosyl)-anthranilate (PRA). This chain is Anthranilate phosphoribosyltransferase, found in Bacillus pumilus (strain SAFR-032).